Consider the following 396-residue polypeptide: Elongation factor Tu 1 (396 aa).

The tr-type G domain maps to 10 to 206 (KPHCNIGTIG…TVDDYIPQPD (197 aa)). Residues 19–26 (GHVDHGKT) form a G1 region. 19–26 (GHVDHGKT) contacts GTP. A Mg(2+)-binding site is contributed by T26. The interval 60 to 64 (GITIN) is G2. The G3 stretch occupies residues 81-84 (DCPG). GTP-binding positions include 81–85 (DCPGH) and 136–139 (NKVD). The tract at residues 136-139 (NKVD) is G4. A G5 region spans residues 174–176 (SAK).

This sequence belongs to the TRAFAC class translation factor GTPase superfamily. Classic translation factor GTPase family. EF-Tu/EF-1A subfamily. In terms of assembly, monomer.

The protein resides in the cytoplasm. It carries out the reaction GTP + H2O = GDP + phosphate + H(+). Its function is as follows. GTP hydrolase that promotes the GTP-dependent binding of aminoacyl-tRNA to the A-site of ribosomes during protein biosynthesis. In Caulobacter sp. (strain K31), this protein is Elongation factor Tu 1.